Consider the following 70-residue polypeptide: Small ribosomal subunit protein bS21 (70 aa).

Residues 40–70 (KPTAERKRKHAAAVKRHYKRIRSQQLPPRLY) form a disordered region. Residues 45–61 (RKRKHAAAVKRHYKRIR) are compositionally biased toward basic residues.

The protein belongs to the bacterial ribosomal protein bS21 family.

This chain is Small ribosomal subunit protein bS21, found in Bordetella parapertussis (strain 12822 / ATCC BAA-587 / NCTC 13253).